A 261-amino-acid polypeptide reads, in one-letter code: Kallikrein 1-related peptidase b5 (261 aa).

An N-terminal signal peptide occupies residues 1–18; that stretch reads MWFLILFLALSLGGIDAA. A propeptide spans 19 to 24 (activation peptide); sequence PPVQSR. One can recognise a Peptidase S1 domain in the interval 25–258; that stretch reads IFGGFNCEKN…FNSWIKDTIA (234 aa). 5 disulfide bridges follow: Cys-31–Cys-173, Cys-50–Cys-66, Cys-152–Cys-219, Cys-184–Cys-198, and Cys-209–Cys-234. His-65 (charge relay system) is an active-site residue. Asn-102 carries N-linked (GlcNAc...) asparagine glycosylation. Asp-120 (charge relay system) is an active-site residue. Ser-213 functions as the Charge relay system in the catalytic mechanism.

The protein belongs to the peptidase S1 family. Kallikrein subfamily.

It catalyses the reaction Preferential cleavage of Arg-|-Xaa bonds in small molecule substrates. Highly selective action to release kallidin (lysyl-bradykinin) from kininogen involves hydrolysis of Met-|-Xaa or Leu-|-Xaa.. Functionally, glandular kallikreins cleave Met-Lys and Arg-Ser bonds in kininogen to release Lys-bradykinin. This Mus musculus (Mouse) protein is Kallikrein 1-related peptidase b5 (Klk1b5).